Reading from the N-terminus, the 160-residue chain is MATQKKPDLSDPQLRAKLAKGMGHNYYGEPAWPNDLLYVFPIVIMGSFAAIVALAVLDPAMTGEPANPFATPLEILPEWYLYPVFQILRSLPNKLLGVLAMASVPLGLILVPFIENVNKFQNPFRRPVATTVFLFGTLVTLWLGIGAALPLDKSLTLGLF.

The next 3 membrane-spanning stretches (helical) occupy residues 36-56, 95-115, and 131-151; these read LLYV…ALAV, LLGV…PFIE, and TVFL…ALPL.

This sequence belongs to the cytochrome b family. PetD subfamily. As to quaternary structure, the 4 large subunits of the cytochrome b6-f complex are cytochrome b6, subunit IV (17 kDa polypeptide, PetD), cytochrome f and the Rieske protein, while the 4 small subunits are PetG, PetL, PetM and PetN. The complex functions as a dimer.

It localises to the cellular thylakoid membrane. In terms of biological role, component of the cytochrome b6-f complex, which mediates electron transfer between photosystem II (PSII) and photosystem I (PSI), cyclic electron flow around PSI, and state transitions. The protein is Cytochrome b6-f complex subunit 4 of Desmonostoc sp. (strain PCC 7906) (Nostoc sp. (strain PCC 7906)).